An 84-amino-acid polypeptide reads, in one-letter code: Putative membrane protein insertion efficiency factor (84 aa).

This sequence belongs to the UPF0161 family.

The protein localises to the cell inner membrane. Its function is as follows. Could be involved in insertion of integral membrane proteins into the membrane. The sequence is that of Putative membrane protein insertion efficiency factor from Shewanella frigidimarina (strain NCIMB 400).